A 162-amino-acid chain; its full sequence is Regulatory protein RecX (162 aa).

Belongs to the RecX family.

The protein resides in the cytoplasm. Functionally, modulates RecA activity. The chain is Regulatory protein RecX from Pectobacterium atrosepticum (strain SCRI 1043 / ATCC BAA-672) (Erwinia carotovora subsp. atroseptica).